The sequence spans 147 residues: Large ribosomal subunit protein bL9 (147 aa).

It belongs to the bacterial ribosomal protein bL9 family.

Binds to the 23S rRNA. This Campylobacter jejuni subsp. jejuni serotype O:2 (strain ATCC 700819 / NCTC 11168) protein is Large ribosomal subunit protein bL9.